Reading from the N-terminus, the 367-residue chain is 3-dehydroquinate synthase (367 aa).

Residues 111 to 115, 135 to 136, Lys148, Lys157, and 175 to 178 each bind NAD(+); these read GVVGD, TS, and TLDT. Glu190, His254, and His271 together coordinate Zn(2+).

Belongs to the sugar phosphate cyclases superfamily. Dehydroquinate synthase family. The cofactor is Co(2+). Requires Zn(2+) as cofactor. NAD(+) serves as cofactor.

The protein localises to the cytoplasm. It catalyses the reaction 7-phospho-2-dehydro-3-deoxy-D-arabino-heptonate = 3-dehydroquinate + phosphate. It functions in the pathway metabolic intermediate biosynthesis; chorismate biosynthesis; chorismate from D-erythrose 4-phosphate and phosphoenolpyruvate: step 2/7. Its function is as follows. Catalyzes the conversion of 3-deoxy-D-arabino-heptulosonate 7-phosphate (DAHP) to dehydroquinate (DHQ). The sequence is that of 3-dehydroquinate synthase from Salinibacter ruber (strain DSM 13855 / M31).